Consider the following 248-residue polypeptide: 1-(5-phosphoribosyl)-5-[(5-phosphoribosylamino)methylideneamino] imidazole-4-carboxamide isomerase (248 aa).

Residue D8 is the Proton acceptor of the active site. Catalysis depends on D129, which acts as the Proton donor.

It belongs to the HisA/HisF family.

The protein resides in the cytoplasm. The enzyme catalyses 1-(5-phospho-beta-D-ribosyl)-5-[(5-phospho-beta-D-ribosylamino)methylideneamino]imidazole-4-carboxamide = 5-[(5-phospho-1-deoxy-D-ribulos-1-ylimino)methylamino]-1-(5-phospho-beta-D-ribosyl)imidazole-4-carboxamide. It functions in the pathway amino-acid biosynthesis; L-histidine biosynthesis; L-histidine from 5-phospho-alpha-D-ribose 1-diphosphate: step 4/9. This Rhizobium etli (strain ATCC 51251 / DSM 11541 / JCM 21823 / NBRC 15573 / CFN 42) protein is 1-(5-phosphoribosyl)-5-[(5-phosphoribosylamino)methylideneamino] imidazole-4-carboxamide isomerase.